Reading from the N-terminus, the 461-residue chain is Asparagine--tRNA ligase (461 aa).

It belongs to the class-II aminoacyl-tRNA synthetase family. As to quaternary structure, homodimer.

The protein localises to the cytoplasm. It carries out the reaction tRNA(Asn) + L-asparagine + ATP = L-asparaginyl-tRNA(Asn) + AMP + diphosphate + H(+). This chain is Asparagine--tRNA ligase, found in Solibacter usitatus (strain Ellin6076).